The sequence spans 444 residues: Zinc finger CCCH domain-containing protein 63 (444 aa).

3 C3H1-type zinc fingers span residues 56–84 (RIGE…HPAD), 101–129 (RIGQ…HPRE), and 147–175 (RPNE…HPQP). Residues 251-276 (GSSSSDDQQRTAGGAQYYTGSRHSET) are disordered. 2 C3H1-type zinc fingers span residues 309-337 (RPDQ…HPKE) and 355-383 (RPGE…HPMG). The segment at 405–444 (PVPAHSEVSPDNVSGRSRRITHSDSQQIPSGERGTEREAS) is disordered.

The chain is Zinc finger CCCH domain-containing protein 63 from Oryza sativa subsp. japonica (Rice).